Reading from the N-terminus, the 84-residue chain is Putative membrane protein insertion efficiency factor (84 aa).

The disordered stretch occupies residues 63–84; that stretch reads GEDPVPNHFTLRRNKKEKPSKS.

This sequence belongs to the UPF0161 family.

It localises to the cell membrane. Its function is as follows. Could be involved in insertion of integral membrane proteins into the membrane. This chain is Putative membrane protein insertion efficiency factor, found in Streptococcus mutans serotype c (strain ATCC 700610 / UA159).